Reading from the N-terminus, the 680-residue chain is DNA-directed RNA polymerase subunit beta' (680 aa).

The Zn(2+) site is built by Cys-69, Cys-71, Cys-87, and Cys-90. Mg(2+)-binding residues include Asp-489, Asp-491, and Asp-493.

It belongs to the RNA polymerase beta' chain family. RpoC1 subfamily. In terms of assembly, in plastids the minimal PEP RNA polymerase catalytic core is composed of four subunits: alpha, beta, beta', and beta''. When a (nuclear-encoded) sigma factor is associated with the core the holoenzyme is formed, which can initiate transcription. Mg(2+) is required as a cofactor. Zn(2+) serves as cofactor.

It localises to the plastid. It is found in the chloroplast. It carries out the reaction RNA(n) + a ribonucleoside 5'-triphosphate = RNA(n+1) + diphosphate. DNA-dependent RNA polymerase catalyzes the transcription of DNA into RNA using the four ribonucleoside triphosphates as substrates. The polypeptide is DNA-directed RNA polymerase subunit beta' (Manihot esculenta (Cassava)).